We begin with the raw amino-acid sequence, 283 residues long: 1-acyl-sn-glycerol-3-phosphate acyltransferase alpha (283 aa).

The N-terminal stretch at 1-26 (MDLWPGAWMLLLLLFLLLLFLLPTLW) is a signal peptide. At 27 to 37 (FCSPSAKYFFK) the chain is on the lumenal side. Residues 38-58 (MAFYNGWILFLAVLAIPVCAV) traverse the membrane as a helical segment. Over 59-127 (RGRNVENMKI…PGRCVPIAKR (69 aa)) the chain is Cytoplasmic. Positions 104–109 (HQSSLD) match the HXXXXD motif motif. Residues 128 to 148 (ELLWAGSAGLACWLAGVIFID) form a helical membrane-spanning segment. At 149 to 283 (RKRTGDAISV…DYLKKPGGGG (135 aa)) the chain is on the lumenal side. The short motif at 178–181 (EGTR) is the EGTR motif element.

This sequence belongs to the 1-acyl-sn-glycerol-3-phosphate acyltransferase family. In terms of tissue distribution, widely expressed. Expressed in adipose tissue and at high levels in testis and pancreas. Expressed at lower levels in tissues such as heart, brain, placenta, kidney, lung, spleen, thymus, prostate, ovary, intestine, colon, leukocyte and liver.

It localises to the endoplasmic reticulum membrane. It carries out the reaction a 1-acyl-sn-glycero-3-phosphate + an acyl-CoA = a 1,2-diacyl-sn-glycero-3-phosphate + CoA. The enzyme catalyses 1-(9Z-octadecenoyl)-sn-glycero-3-phosphate + (9Z)-octadecenoyl-CoA = 1,2-di-(9Z-octadecenoyl)-sn-glycero-3-phosphate + CoA. The catalysed reaction is 1-(9Z-octadecenoyl)-sn-glycero-3-phosphate + hexadecanoyl-CoA = 1-(9Z)-octadecenoyl-2-hexadecanoyl-sn-glycero-3-phosphate + CoA. It catalyses the reaction heptadecanoyl-CoA + 1-(9Z-octadecenoyl)-sn-glycero-3-phosphate = 1-(9Z)-octadecenoyl-2-heptadecanoyl-sn-glycero-3-phosphate + CoA. It carries out the reaction 1-(9Z-octadecenoyl)-sn-glycero-3-phosphate + octadecanoyl-CoA = 1-(9Z-octadecenoyl)-2-octadecanoyl-sn-glycero-3-phosphate + CoA. The enzyme catalyses 1-(9Z-octadecenoyl)-sn-glycero-3-phosphate + (9Z,12Z)-octadecadienoyl-CoA = 1-(9Z)-octadecenoyl-2-(9Z,12Z)-octadecadienoyl-sn-glycero-3-phosphate + CoA. The catalysed reaction is 1-(9Z-octadecenoyl)-sn-glycero-3-phosphate + tetradecanoyl-CoA = 1-(9Z)-octadecenoyl-2-tetradecanoyl-sn-glycero-3-phosphate + CoA. It catalyses the reaction pentadecanoyl-CoA + 1-(9Z-octadecenoyl)-sn-glycero-3-phosphate = 1-(9Z)-octadecenoyl-2-pentadecanoyl-sn-glycero-3-phosphate + CoA. It carries out the reaction 1-hexadecanoyl-sn-glycero-3-phosphate + (9Z)-octadecenoyl-CoA = 1-hexadecanoyl-2-(9Z-octadecenoyl)-sn-glycero-3-phosphate + CoA. The enzyme catalyses 1-(9Z,12Z,15Z)-octadecatrienoyl-sn-glycero-3-phosphate + (9Z)-octadecenoyl-CoA = 1-(9Z,12Z,15Z)-octadecatrienoyl-2-(9Z)-octadecenoyl-sn-glycero-3-phosphate + CoA. The catalysed reaction is 1-(6Z,9Z,12Z-octadecatrienoyl)-sn-glycero-3-phosphate + (9Z)-octadecenoyl-CoA = (6Z,9Z,12Z)-octadecatrienoyl-2-(9Z)-octadecenoyl-sn-glycero-3-phosphate + CoA. It catalyses the reaction 1-eicosanoyl-sn-glycero-3-phosphate + (9Z)-octadecenoyl-CoA = 1-eicosanoyl-2-(9Z)-octadecenoyl-sn-glycero-3-phosphate + CoA. It carries out the reaction 1-tetradecanoyl-sn-glycerol 3-phosphate + (9Z)-octadecenoyl-CoA = 1-tetradecanoyl-2-(9Z)-octadecenoyl-sn-glycero-3-phosphate + CoA. The enzyme catalyses 1-(9Z-octadecenoyl)-sn-glycero-3-phosphate + (5Z,8Z,11Z,14Z)-eicosatetraenoyl-CoA = 1-(9Z)-octadecenoyl-2-(5Z,8Z,11Z,14Z)-eicosatetraenoyl-sn-glycero-3-phosphate + CoA. The catalysed reaction is 1-(9Z-octadecenoyl)-sn-glycero-3-phosphate + dodecanoyl-CoA = 1-(9Z)-octadecenoyl-2-dodecanoyl-sn-glycero-3-phosphate + CoA. It catalyses the reaction (6Z)-octadecenoyl-CoA + 1-(9Z-octadecenoyl)-sn-glycero-3-phosphate = 1-(9Z)-octadecenoyl-2-(6Z)-octadecenoyl-sn-glycero-3-phosphate + CoA. It carries out the reaction (11Z)-octadecenoyl-CoA + 1-(9Z-octadecenoyl)-sn-glycero-3-phosphate = 1-(9Z)-octadecenoyl-2-(11Z)-octadecenoyl-sn-glycero-3-phosphate + CoA. The enzyme catalyses (9Z)-hexadecenoyl-CoA + 1-(9Z-octadecenoyl)-sn-glycero-3-phosphate = 1-(9Z-octadecenoyl)-2-(9Z-hexadecenoyl)-sn-glycero-3-phosphate + CoA. It functions in the pathway phospholipid metabolism; CDP-diacylglycerol biosynthesis; CDP-diacylglycerol from sn-glycerol 3-phosphate: step 2/3. Converts 1-acyl-sn-glycerol-3-phosphate (lysophosphatidic acid or LPA) into 1,2-diacyl-sn-glycerol-3-phosphate (phosphatidic acid or PA) by incorporating an acyl moiety at the sn-2 position of the glycerol backbone. The chain is 1-acyl-sn-glycerol-3-phosphate acyltransferase alpha (AGPAT1) from Homo sapiens (Human).